Here is a 384-residue protein sequence, read N- to C-terminus: Putative glutamate--cysteine ligase 2-2 (384 aa).

The protein belongs to the glutamate--cysteine ligase type 2 family. YbdK subfamily.

The catalysed reaction is L-cysteine + L-glutamate + ATP = gamma-L-glutamyl-L-cysteine + ADP + phosphate + H(+). In terms of biological role, ATP-dependent carboxylate-amine ligase which exhibits weak glutamate--cysteine ligase activity. The sequence is that of Putative glutamate--cysteine ligase 2-2 from Rubrobacter xylanophilus (strain DSM 9941 / JCM 11954 / NBRC 16129 / PRD-1).